The chain runs to 498 residues: ATP synthase subunit beta, chloroplastic (498 aa).

172 to 179 (GGAGVGKT) contacts ATP.

This sequence belongs to the ATPase alpha/beta chains family. F-type ATPases have 2 components, CF(1) - the catalytic core - and CF(0) - the membrane proton channel. CF(1) has five subunits: alpha(3), beta(3), gamma(1), delta(1), epsilon(1). CF(0) has four main subunits: a(1), b(1), b'(1) and c(9-12).

It localises to the plastid. Its subcellular location is the chloroplast thylakoid membrane. It carries out the reaction ATP + H2O + 4 H(+)(in) = ADP + phosphate + 5 H(+)(out). Its function is as follows. Produces ATP from ADP in the presence of a proton gradient across the membrane. The catalytic sites are hosted primarily by the beta subunits. This Whiteheadia bifolia (Elephants ears) protein is ATP synthase subunit beta, chloroplastic.